Reading from the N-terminus, the 563-residue chain is Protein NRT1/ PTR FAMILY 5.9 (563 aa).

A helical membrane pass occupies residues 56–76 (TWAGFTSMLPLFSAPLADTYW). A Phosphothreonine modification is found at Thr81. The next 10 membrane-spanning stretches (helical) occupy residues 82–102 (ILASSSVYFVGLVGLTWTAFA), 110–130 (TISSYFLYSSLCLVSIGLGVL), 168–188 (FFQLWYFGVCTGSLMGVTVMA), 194–214 (FGWVLGFAIPGIVIFLSILVF), 317–337 (FPIWMMLLMFAVIFQLPATFF), 362–382 (TITLSIILLMPLYDKILIPIT), 394–414 (VMERMGVGMFLSIIAIVIAAI), 441–461 (IFWLLPQYILLGISDIFTVVG), 479–499 (FALYTSVFGVGSFVSAALISI), and 528–548 (WLLALTSTISFVVYIFLCKFF).

The protein belongs to the major facilitator superfamily. Proton-dependent oligopeptide transporter (POT/PTR) (TC 2.A.17) family. Expressed in roots and flowers.

The protein localises to the membrane. This chain is Protein NRT1/ PTR FAMILY 5.9 (NPF5.9), found in Arabidopsis thaliana (Mouse-ear cress).